Consider the following 184-residue polypeptide: uncharacterized protein (184 aa).

It to M.tuberculosis Rv0487.

This is an uncharacterized protein from Mycobacterium leprae (strain TN).